A 101-amino-acid chain; its full sequence is MAKLALIEREKKRAKLAAKFAPKRAALKAIIDDQEKSEEERYMARLELQQLPRNANPTRQRNRCAITGRPRGTFRKFGLARNKIREIAFKGEIPGLTKASW.

It belongs to the universal ribosomal protein uS14 family. As to quaternary structure, part of the 30S ribosomal subunit. Contacts proteins S3 and S10.

Binds 16S rRNA, required for the assembly of 30S particles and may also be responsible for determining the conformation of the 16S rRNA at the A site. In Cupriavidus pinatubonensis (strain JMP 134 / LMG 1197) (Cupriavidus necator (strain JMP 134)), this protein is Small ribosomal subunit protein uS14.